We begin with the raw amino-acid sequence, 537 residues long: Chaperonin GroEL (537 aa).

Residues 29-32, 86-90, G413, 477-479, and D493 contribute to the ATP site; these read TLGP, DGTTT, and NAA.

This sequence belongs to the chaperonin (HSP60) family. Forms a cylinder of 14 subunits composed of two heptameric rings stacked back-to-back. Interacts with the co-chaperonin GroES.

The protein localises to the cytoplasm. It carries out the reaction ATP + H2O + a folded polypeptide = ADP + phosphate + an unfolded polypeptide.. Functionally, together with its co-chaperonin GroES, plays an essential role in assisting protein folding. The GroEL-GroES system forms a nano-cage that allows encapsulation of the non-native substrate proteins and provides a physical environment optimized to promote and accelerate protein folding. The chain is Chaperonin GroEL from Parascardovia denticolens (Bifidobacterium denticolens).